The following is a 359-amino-acid chain: Probable 2-oxoacid dependent dioxygenase (359 aa).

Positions 207-308 (KGLWMLCHCF…ISVACFFVHT (102 aa)) constitute a Fe2OG dioxygenase domain. Residues His-231, Asp-233, and His-287 each contribute to the Fe cation site. The disordered stretch occupies residues 329-359 (PPKYRDTTSESSNHYVARKPNGNSSLDHLRI). The segment covering 349–359 (NGNSSLDHLRI) has biased composition (polar residues).

It belongs to the iron/ascorbate-dependent oxidoreductase family. The cofactor is Fe(2+). Expressed in leaves and seeds. All cultivars with seed-only-functional allele have low to non-detectable GSL-OH expression in the leaves.

The enzyme catalyses gluconapin + AH2 + O2 = progoitrin + A + H2O. Its function is as follows. Necessary for the hydroxylation of but-3-enyl glucosinolate to 2-hydroxybut-3-enyl glucosinolate, which is toxic to insects, bacteria and nematodes, inhibits seed germination and produces bitter flavors. In Arabidopsis thaliana (Mouse-ear cress), this protein is Probable 2-oxoacid dependent dioxygenase.